Reading from the N-terminus, the 441-residue chain is Ribosomal protein uS12 methylthiotransferase RimO (441 aa).

One can recognise an MTTase N-terminal domain in the interval 8–118 (PKIGFVSLGC…VLEHVHHYVP (111 aa)). [4Fe-4S] cluster-binding residues include cysteine 17, cysteine 53, cysteine 82, cysteine 150, cysteine 154, and cysteine 157. In terms of domain architecture, Radical SAM core spans 136-373 (LTPRHYAYLK…MQLQQQISAE (238 aa)). The 66-residue stretch at 376–441 (QEKVGREILV…DEYDLWGSRV (66 aa)) folds into the TRAM domain.

It belongs to the methylthiotransferase family. RimO subfamily. The cofactor is [4Fe-4S] cluster.

The protein resides in the cytoplasm. The enzyme catalyses L-aspartate(89)-[ribosomal protein uS12]-hydrogen + (sulfur carrier)-SH + AH2 + 2 S-adenosyl-L-methionine = 3-methylsulfanyl-L-aspartate(89)-[ribosomal protein uS12]-hydrogen + (sulfur carrier)-H + 5'-deoxyadenosine + L-methionine + A + S-adenosyl-L-homocysteine + 2 H(+). Its function is as follows. Catalyzes the methylthiolation of an aspartic acid residue of ribosomal protein uS12. The chain is Ribosomal protein uS12 methylthiotransferase RimO from Citrobacter koseri (strain ATCC BAA-895 / CDC 4225-83 / SGSC4696).